A 658-amino-acid polypeptide reads, in one-letter code: Translation factor GUF1, mitochondrial (658 aa).

A mitochondrion-targeting transit peptide spans 1–40 (MRGCLQTVRWLTSAWQRPPSYPPLSRAAPCRFFNVSIPRN). Residues 60–240 (DRFRNFCIVA…TVVEQIPAPV (181 aa)) enclose the tr-type G domain. GTP contacts are provided by residues 69 to 76 (AHVDHGKS), 133 to 137 (DTPGH), and 187 to 190 (NKVD).

The protein belongs to the TRAFAC class translation factor GTPase superfamily. Classic translation factor GTPase family. LepA subfamily.

The protein resides in the mitochondrion inner membrane. The enzyme catalyses GTP + H2O = GDP + phosphate + H(+). Its function is as follows. Promotes mitochondrial protein synthesis. May act as a fidelity factor of the translation reaction, by catalyzing a one-codon backward translocation of tRNAs on improperly translocated ribosomes. Binds to mitochondrial ribosomes in a GTP-dependent manner. This is Translation factor GUF1, mitochondrial from Paracoccidioides brasiliensis (strain Pb03).